The following is a 260-amino-acid chain: PsbP domain-containing protein 4, chloroplastic (260 aa).

Belongs to the PsbP family.

The protein resides in the plastid. Its subcellular location is the chloroplast thylakoid lumen. This Arabidopsis thaliana (Mouse-ear cress) protein is PsbP domain-containing protein 4, chloroplastic (PPD4).